The following is a 236-amino-acid chain: Large ribosomal subunit protein uL1 (236 aa).

The protein belongs to the universal ribosomal protein uL1 family. In terms of assembly, part of the 50S ribosomal subunit.

Binds directly to 23S rRNA. The L1 stalk is quite mobile in the ribosome, and is involved in E site tRNA release. Its function is as follows. Protein L1 is also a translational repressor protein, it controls the translation of the L11 operon by binding to its mRNA. This is Large ribosomal subunit protein uL1 from Protochlamydia amoebophila (strain UWE25).